The following is a 307-amino-acid chain: Nucleotide-binding protein AAur_2084 (307 aa).

Residues 1 to 21 (MDEATAKSGTEQDGLTPVKPP) are disordered. 30-37 (GMSGAGRS) is a binding site for ATP. 81-84 (DVRS) contacts GTP.

This sequence belongs to the RapZ-like family.

Its function is as follows. Displays ATPase and GTPase activities. In Paenarthrobacter aurescens (strain TC1), this protein is Nucleotide-binding protein AAur_2084.